The following is a 589-amino-acid chain: WD repeat-containing protein 26 homolog (589 aa).

Residues 1–57 form a disordered region; sequence MGVVEDTEPPLKRAKRLADEPNGFSANSSVRGSSVNSNSLGDLMARPLPSQGDDETI. Residues 25 to 39 are compositionally biased toward low complexity; that stretch reads SANSSVRGSSVNSNS. Residues 64–96 form the LisH domain; sequence RKSEFVRIITRALYSLGYDKTGAMLEEESGISL. One can recognise a CTLH domain in the interval 97-154; the sequence is HNSTIKLFLQQVKDGKWDQSVKTLHRIGFPDEKAVKAASFLLLEQKFLEFLKVEKIAD. WD repeat units lie at residues 272–311, 317–358, 360–398, 401–440, 442–480, 484–526, and 529–569; these read SHTDEVWFLQFSHNGKYLASSSKDQTAIIWEISADGHISL, GHHK…HMYE, GGISPISCGWYPDGQGIIAGMTDRSICMWDLDGREKECW, QRTQKVSDIAMTDDGKWLVSVCKDSVISLFDREATVERLI, EEDMITSFSLSNDNKYILVNLLNQEIRLWNIEGDPKIVS, GHKR…LIVE, and GHAG…QQNQ.

Interacts with RANBPM. Expressed in roots, leaves and flowers.

The protein localises to the cytoplasm. Its function is as follows. Acts as a component involved in the crosstalk regulation between light, hormone and abiotic stress response. This Arabidopsis thaliana (Mouse-ear cress) protein is WD repeat-containing protein 26 homolog.